The primary structure comprises 1828 residues: Proteasome activator complex subunit 4 (1828 aa).

HEAT repeat units lie at residues 462–506 (PEGP…LVDC), 985–1024 (NFCC…NHGG), 1164–1202 (YVLP…QLKR), 1339–1377 (DAFL…GSKH), 1621–1659 (PVQV…YNLF), and 1665–1703 (EESV…CNFL). Residues 1635–1723 (ARSSSWHARY…EALCKTRLPK (89 aa)) are bromodomain-like (BRDL).

Belongs to the BLM10 family. As to quaternary structure, homodimer. Interacts with the 20S and 26S proteasomes.

Its subcellular location is the cytoplasm. The protein resides in the cytosol. It is found in the nucleus. It localises to the nucleus speckle. Functionally, associated component of the proteasome that specifically recognizes acetylated histones and promotes ATP- and ubiquitin-independent degradation of core histones during DNA damage response. Recognizes and binds acetylated histones via its bromodomain-like (BRDL) region and activates the proteasome by opening the gated channel for substrate entry. Binds to the core proteasome via its C-terminus, which occupies the same binding sites as the proteasomal ATPases, opening the closed structure of the proteasome via an active gating mechanism. involved in DNA damage response in somatic cells: binds to acetylated histones and promotes degradation of histones. This Xenopus laevis (African clawed frog) protein is Proteasome activator complex subunit 4 (psme4).